Reading from the N-terminus, the 86-residue chain is Large ribosomal subunit protein bL31 (86 aa).

Residues 64–86 (KYGMGSANSSESKDQKEEKDSKK) form a disordered region. The segment covering 74–86 (ESKDQKEEKDSKK) has biased composition (basic and acidic residues).

Belongs to the bacterial ribosomal protein bL31 family. Type A subfamily. As to quaternary structure, part of the 50S ribosomal subunit.

Binds the 23S rRNA. This chain is Large ribosomal subunit protein bL31, found in Prochlorococcus marinus (strain MIT 9301).